A 902-amino-acid chain; its full sequence is Tiger protein B1 (902 aa).

Positions 1 to 24 (MKVIYIYLLLLLVCKFLFVKSSCS) are cleaved as a signal peptide. Residues 25 to 803 (LKVGKIECTK…IIYSENKSTG (779 aa)) lie on the Extracellular side of the membrane. N43, N144, N184, N223, N272, N279, N288, N358, N389, N398, N437, N559, N628, N644, N706, N753, N764, N771, and N799 each carry an N-linked (GlcNAc...) asparagine glycan. Positions 249-323 (MEGVLNDNGG…ITIDGEYKSN (75 aa)) constitute an IPT/TIG 1 domain. IPT/TIG domains are found at residues 603-680 (PIIE…ISSS) and 704-788 (ITNT…IFQF). A helical transmembrane segment spans residues 804–824 (FPNEMYLGFVVFVIFIALISF). The Cytoplasmic segment spans residues 825–902 (AAKNQIEKYF…IRRCFKEHTD (78 aa)).

It localises to the cell membrane. TgrB1 and tgrC1 are involved in kin discrimination. They play an essential role in aggregation and subsequent development. This chain is Tiger protein B1 (tgrB1), found in Dictyostelium discoideum (Social amoeba).